The chain runs to 357 residues: Glutamine synthetase root isozyme 1 (357 aa).

The GS beta-grasp domain maps to 19-99 (IIAEYIWIGG…VMCDCYTPQG (81 aa)). The GS catalytic domain occupies 106–357 (KRYSAAKVFS…AETTILWNGN (252 aa)).

This sequence belongs to the glutamine synthetase family. As to quaternary structure, homooctamer. As to expression, found mainly in the cortical tissues of seedling roots, and in the root tip.

The protein localises to the cytoplasm. It carries out the reaction L-glutamate + NH4(+) + ATP = L-glutamine + ADP + phosphate + H(+). Functionally, plays a role in the flow of nitrogen into nitrogenous organic compounds. The polypeptide is Glutamine synthetase root isozyme 1 (GLN6) (Zea mays (Maize)).